Here is a 179-residue protein sequence, read N- to C-terminus: uncharacterized protein (179 aa).

Polar residues-rich tracts occupy residues 1–37 and 60–70; these read PLGAATSNIPPQYARSTLQPTGLTSRAQSYPTNTNPG and IPTQSTTTFRS. Disordered regions lie at residues 1–41 and 60–82; these read PLGA…PSAK and IPTQSTTTFRSNPPLPPVVPGRR.

Component of the acid-soluble and acid-insoluble organic matrix of calcified shell layers (at protein level).

It is found in the secreted. This is an uncharacterized protein from Haliotis asinina (Donkey's ear abalone).